The primary structure comprises 255 residues: Imidazole glycerol phosphate synthase subunit HisF (255 aa).

Active-site residues include aspartate 12 and aspartate 131.

This sequence belongs to the HisA/HisF family. In terms of assembly, heterodimer of HisH and HisF.

The protein resides in the cytoplasm. The catalysed reaction is 5-[(5-phospho-1-deoxy-D-ribulos-1-ylimino)methylamino]-1-(5-phospho-beta-D-ribosyl)imidazole-4-carboxamide + L-glutamine = D-erythro-1-(imidazol-4-yl)glycerol 3-phosphate + 5-amino-1-(5-phospho-beta-D-ribosyl)imidazole-4-carboxamide + L-glutamate + H(+). It functions in the pathway amino-acid biosynthesis; L-histidine biosynthesis; L-histidine from 5-phospho-alpha-D-ribose 1-diphosphate: step 5/9. Functionally, IGPS catalyzes the conversion of PRFAR and glutamine to IGP, AICAR and glutamate. The HisF subunit catalyzes the cyclization activity that produces IGP and AICAR from PRFAR using the ammonia provided by the HisH subunit. The protein is Imidazole glycerol phosphate synthase subunit HisF of Vesicomyosocius okutanii subsp. Calyptogena okutanii (strain HA).